A 74-amino-acid polypeptide reads, in one-letter code: Cytochrome b (74 aa).

A helical transmembrane segment spans residues 34-54; the sequence is FGSLLAICLVTQILTGLLLAM.

This sequence belongs to the cytochrome b family. As to quaternary structure, the cytochrome bc1 complex contains 11 subunits: 3 respiratory subunits (MT-CYB, CYC1 and UQCRFS1), 2 core proteins (UQCRC1 and UQCRC2) and 6 low-molecular weight proteins (UQCRH/QCR6, UQCRB/QCR7, UQCRQ/QCR8, UQCR10/QCR9, UQCR11/QCR10 and a cleavage product of UQCRFS1). This cytochrome bc1 complex then forms a dimer. Heme is required as a cofactor.

The protein resides in the mitochondrion inner membrane. In terms of biological role, component of the ubiquinol-cytochrome c reductase complex (complex III or cytochrome b-c1 complex) that is part of the mitochondrial respiratory chain. The b-c1 complex mediates electron transfer from ubiquinol to cytochrome c. Contributes to the generation of a proton gradient across the mitochondrial membrane that is then used for ATP synthesis. In Anser caerulescens (Snow goose), this protein is Cytochrome b (MT-CYB).